A 479-amino-acid polypeptide reads, in one-letter code: Flap endonuclease 1 (479 aa).

An N-domain region spans residues 1–106 (MGIKGLTKFI…SELEKRGEKR (106 aa)). Asp34 contributes to the Mg(2+) binding site. 2 residues coordinate DNA: Arg47 and Arg72. Positions 88, 160, 162, 181, and 183 each coordinate Mg(2+). Residues 124-266 (EIKKQSGRTV…KTAYNLIKEY (143 aa)) form an I-domain region. Glu160 is a binding site for DNA. Residues Gly244 and Asp246 each contribute to the DNA site. Asp246 is a binding site for Mg(2+). Positions 349–357 (TQRRLDTFF) are interaction with PCNA. The interval 379-455 (AKGKGKKREL…NSDSGNIKNE (77 aa)) is disordered. A compositionally biased stretch (basic and acidic residues) spans 403–428 (NIKDEKKNTDKMDELKNKSDENFVKD).

Belongs to the XPG/RAD2 endonuclease family. FEN1 subfamily. As to quaternary structure, interacts with PCNA. Three molecules of FEN1 bind to one PCNA trimer with each molecule binding to one PCNA monomer. PCNA stimulates the nuclease activity without altering cleavage specificity. It depends on Mg(2+) as a cofactor. Post-translationally, phosphorylated. Phosphorylation upon DNA damage induces relocalization to the nuclear plasma.

It localises to the nucleus. Its subcellular location is the nucleolus. The protein resides in the nucleoplasm. It is found in the mitochondrion. In terms of biological role, structure-specific nuclease with 5'-flap endonuclease and 5'-3' exonuclease activities involved in DNA replication and repair. During DNA replication, cleaves the 5'-overhanging flap structure that is generated by displacement synthesis when DNA polymerase encounters the 5'-end of a downstream Okazaki fragment. It enters the flap from the 5'-end and then tracks to cleave the flap base, leaving a nick for ligation. Also involved in the long patch base excision repair (LP-BER) pathway, by cleaving within the apurinic/apyrimidinic (AP) site-terminated flap. Acts as a genome stabilization factor that prevents flaps from equilibrating into structures that lead to duplications and deletions. Also possesses 5'-3' exonuclease activity on nicked or gapped double-stranded DNA, and exhibits RNase H activity. Also involved in replication and repair of rDNA and in repairing mitochondrial DNA. This is Flap endonuclease 1 from Plasmodium chabaudi chabaudi.